The sequence spans 82 residues: RNA-binding protein YbxF (82 aa).

This sequence belongs to the eukaryotic ribosomal protein eL8 family.

In Geobacillus stearothermophilus (Bacillus stearothermophilus), this protein is RNA-binding protein YbxF.